We begin with the raw amino-acid sequence, 180 residues long: Small ribosomal subunit protein uS4 (180 aa).

The S4 RNA-binding domain maps to 103-174; the sequence is RRLQTLVFKK…HPERMVIEEV (72 aa).

Belongs to the universal ribosomal protein uS4 family. As to quaternary structure, part of the 30S ribosomal subunit. Contacts protein S5. The interaction surface between S4 and S5 is involved in control of translational fidelity.

Functionally, one of the primary rRNA binding proteins, it binds directly to 16S rRNA where it nucleates assembly of the body of the 30S subunit. Its function is as follows. With S5 and S12 plays an important role in translational accuracy. The polypeptide is Small ribosomal subunit protein uS4 (Thermococcus sibiricus (strain DSM 12597 / MM 739)).